We begin with the raw amino-acid sequence, 248 residues long: Coproheme decarboxylase (248 aa).

Fe-coproporphyrin III contacts are provided by residues arginine 130, 144–148 (YPMDK), histidine 171, glutamine 184, and serine 222. Tyrosine 144 is a catalytic residue.

It belongs to the ChdC family. Type 1 subfamily. In terms of assembly, homopentamer. Fe-coproporphyrin III serves as cofactor.

It catalyses the reaction Fe-coproporphyrin III + 2 H2O2 + 2 H(+) = heme b + 2 CO2 + 4 H2O. It carries out the reaction Fe-coproporphyrin III + H2O2 + H(+) = harderoheme III + CO2 + 2 H2O. The catalysed reaction is harderoheme III + H2O2 + H(+) = heme b + CO2 + 2 H2O. Its pathway is porphyrin-containing compound metabolism; protoheme biosynthesis. In terms of biological role, involved in coproporphyrin-dependent heme b biosynthesis. Catalyzes the decarboxylation of Fe-coproporphyrin III (coproheme) to heme b (protoheme IX), the last step of the pathway. The reaction occurs in a stepwise manner with a three-propionate intermediate. The chain is Coproheme decarboxylase from Geobacillus kaustophilus (strain HTA426).